The primary structure comprises 916 residues: Protein translocase subunit SecA (916 aa).

ATP-binding positions include glutamine 87, glycine 105–threonine 109, and aspartate 507. Zn(2+)-binding residues include cysteine 900, cysteine 902, cysteine 911, and histidine 912.

This sequence belongs to the SecA family. Monomer and homodimer. Part of the essential Sec protein translocation apparatus which comprises SecA, SecYEG and auxiliary proteins SecDF-YajC and YidC. Zn(2+) is required as a cofactor.

The protein localises to the cell inner membrane. It is found in the cytoplasm. The enzyme catalyses ATP + H2O + cellular proteinSide 1 = ADP + phosphate + cellular proteinSide 2.. In terms of biological role, part of the Sec protein translocase complex. Interacts with the SecYEG preprotein conducting channel. Has a central role in coupling the hydrolysis of ATP to the transfer of proteins into and across the cell membrane, serving both as a receptor for the preprotein-SecB complex and as an ATP-driven molecular motor driving the stepwise translocation of polypeptide chains across the membrane. The protein is Protein translocase subunit SecA of Neisseria gonorrhoeae (strain ATCC 700825 / FA 1090).